A 487-amino-acid chain; its full sequence is Lysophospholipid acyltransferase 5 (487 aa).

Alanine 2 carries the post-translational modification N-acetylalanine. The next 4 helical transmembrane spans lie at 44 to 64 (LIFS…YLFY), 84 to 104 (FNFG…FLIL), 111 to 131 (VTAV…GYYY), and 180 to 200 (GVPS…FLVG). The N-linked (GlcNAc...) asparagine glycan is linked to asparagine 225. Helical transmembrane passes span 236–256 (LGLV…DDYL) and 285–305 (VTCW…FNGF). N-linked (GlcNAc...) asparagine glycosylation is found at asparagine 308 and asparagine 331. Residues asparagine 338 and histidine 374 contribute to the active site. 3 helical membrane-spanning segments follow: residues 364-384 (GLSL…LICF), 422-442 (LVQQ…FCLF), and 453-473 (SIYF…PYIH). Positions 484–487 (KKRE) match the Di-lysine motif motif.

This sequence belongs to the membrane-bound acyltransferase family. In terms of tissue distribution, detected ubiquitously, with high expression levels in small intestine, brown adipose tissue, liver, kidney and testis. Expressed in liver and both proximal and distal small intestine (at protein level). Expressed in peritoneal macrophages.

Its subcellular location is the endoplasmic reticulum membrane. The catalysed reaction is a 1-acyl-sn-glycero-3-phosphocholine + an acyl-CoA = a 1,2-diacyl-sn-glycero-3-phosphocholine + CoA. It carries out the reaction a 1-acyl-sn-glycero-3-phosphoethanolamine + an acyl-CoA = a 1,2-diacyl-sn-glycero-3-phosphoethanolamine + CoA. It catalyses the reaction a 1-acyl-sn-glycero-3-phospho-L-serine + an acyl-CoA = a 1,2-diacyl-sn-glycero-3-phospho-L-serine + CoA. The enzyme catalyses (9Z,12Z)-octadecadienoyl-CoA + a 1-acyl-sn-glycero-3-phosphocholine = 1-acyl-2-(9Z,12Z)-octadecadienoyl-sn-glycero-3-phosphocholine + CoA. The catalysed reaction is (5Z,8Z,11Z,14Z)-eicosatetraenoyl-CoA + a 1-acyl-sn-glycero-3-phosphocholine = 1-acyl-2-(5Z,8Z,11Z,14Z-eicosatetraenoyl)-sn-glycero-3-phosphocholine + CoA. It carries out the reaction dodecanoyl-CoA + 1-hexadecanoyl-sn-glycero-3-phosphocholine = 1-hexadecanoyl-2-dodecanoyl-sn-glycero-3-phosphocholine + CoA. It catalyses the reaction octadecanoyl-CoA + 1-hexadecanoyl-sn-glycero-3-phosphocholine = 1-hexadecanoyl-2-octadecanoyl-sn-glycero-3-phosphocholine + CoA. The enzyme catalyses 1-dodecanoyl-sn-glycero-3-phosphocholine + hexadecanoyl-CoA = 1-dodecanoyl-2-hexadecanoyl-sn-glycero-3-phosphocholine + CoA. The catalysed reaction is 1-tetradecanoyl-sn-glycero-3-phosphocholine + hexadecanoyl-CoA = 1-tetradecanoyl-2-hexadecanoyl-sn-glycero-3-phosphocholine + CoA. It carries out the reaction 1-hexadecanoyl-sn-glycero-3-phosphocholine + hexadecanoyl-CoA = 1,2-dihexadecanoyl-sn-glycero-3-phosphocholine + CoA. It catalyses the reaction 1-octadecanoyl-sn-glycero-3-phosphocholine + hexadecanoyl-CoA = 1-octadecanoyl-2-hexadecanoyl-sn-glycero-3-phosphocholine + CoA. The enzyme catalyses 1-(9Z-octadecenoyl)-sn-glycero-3-phosphocholine + hexadecanoyl-CoA = 1-(9Z-octadecenoyl)-2-hexadecanoyl-sn-glycero-3-phosphocholine + CoA. The catalysed reaction is (9Z)-hexadecenoyl-CoA + 1-hexadecanoyl-sn-glycero-3-phosphocholine = 1-hexadecanoyl-2-(9Z-hexadecenoyl)-sn-glycero-3-phosphocholine + CoA. It carries out the reaction 1-hexadecanoyl-sn-glycero-3-phosphocholine + (9Z)-octadecenoyl-CoA = 1-hexadecanoyl-2-(9Z-octadecenoyl)-sn-glycero-3-phosphocholine + CoA. It catalyses the reaction (9Z,12Z)-octadecadienoyl-CoA + 1-hexadecanoyl-sn-glycero-3-phosphocholine = 1-hexadecanoyl-2-(9Z,12Z-octadecadienoyl)-sn-glycero-3-phosphocholine + CoA. The enzyme catalyses 1-dodecanoyl-sn-glycero-3-phosphocholine + (5Z,8Z,11Z,14Z)-eicosatetraenoyl-CoA = 1-dodecanoyl-2-(5Z,8Z,11Z,14Z)-eicosatetraenoyl-sn-glycero-3-phosphocholine + CoA. The catalysed reaction is (5Z,8Z,11Z,14Z)-eicosatetraenoyl-CoA + 1-hexadecanoyl-sn-glycero-3-phosphocholine = 1-hexadecanoyl-2-(5Z,8Z,11Z,14Z-eicosatetraenoyl)-sn-glycero-3-phosphocholine + CoA. It carries out the reaction 1-octadecanoyl-sn-glycero-3-phosphocholine + (5Z,8Z,11Z,14Z)-eicosatetraenoyl-CoA = 1-octadecanoyl-2-(5Z,8Z,11Z,14Z-eicosatetraenoyl)-sn-glycero-3-phosphocholine + CoA. It catalyses the reaction 1-eicosanoyl-sn-glycero-3-phosphocholine + (5Z,8Z,11Z,14Z)-eicosatetraenoyl-CoA = 1-eicosanoyl-2-(5Z,8Z,11Z,14Z)-eicosatetraenoyl-sn-glycero-3-phosphocholine + CoA. The enzyme catalyses 1-(9Z-octadecenoyl)-sn-glycero-3-phosphocholine + (9Z)-octadecenoyl-CoA = 1,2-di-(9Z-octadecenoyl)-sn-glycero-3-phosphocholine + CoA. The catalysed reaction is 1-(9Z-octadecenoyl)-sn-glycero-3-phosphocholine + (9Z,12Z)-octadecadienoyl-CoA = 1-(9Z)-octadecenoyl-2-(9Z,12Z)-octadecadienoyl-sn-glycero-3-phosphocholine + CoA. It carries out the reaction 1-(9Z-octadecenoyl)-sn-glycero-3-phosphocholine + (5Z,8Z,11Z,14Z)-eicosatetraenoyl-CoA = 1-(9Z)-octadecenoyl-2-(5Z,8Z,11Z,14Z)-icosatetraenoyl-sn-glycero-3-phosphocholine + CoA. It catalyses the reaction a 1-acyl-sn-glycero-3-phosphoethanolamine + (9Z,12Z)-octadecadienoyl-CoA = 1-acyl-2-(9Z,12Z)-octadecadienoyl-sn-glycero-3-phosphoethanolamine + CoA. The enzyme catalyses 1-(9Z-octadecenoyl)-sn-glycero-3-phosphoethanolamine + (9Z,12Z)-octadecadienoyl-CoA = 1-(9Z)-octadecenoyl-2-(9Z,12Z)-octadecadienoyl-sn-glycero-3-phosphoethanolamine + CoA. The catalysed reaction is 1-(10Z-heptadecenoyl)-sn-glycero-3-phosphoethanolamine + (9Z,12Z)-octadecadienoyl-CoA = 1-(10Z-heptadecenoyl)-2-(9Z,12Z-octadecadienoyl)-sn-glycero-3-phosphoethanolamine + CoA. It carries out the reaction a 1-acyl-sn-glycero-3-phosphoethanolamine + (5Z,8Z,11Z,14Z)-eicosatetraenoyl-CoA = 1-acyl-2-(5Z,8Z,11Z,14Z)-eicosatetraenoyl-sn-glycero-3-phosphoethanolamine + CoA. It catalyses the reaction 1-hexadecanoyl-sn-glycero-3-phosphoethanolamine + (5Z,8Z,11Z,14Z)-eicosatetraenoyl-CoA = 1-hexadecanoyl-2-(5Z,8Z,11Z,14Z-eicosatetraenoyl)-sn-glycero-3-phosphoethanolamine + CoA. The enzyme catalyses 1-(9Z-octadecenoyl)-sn-glycero-3-phosphoethanolamine + (5Z,8Z,11Z,14Z)-eicosatetraenoyl-CoA = 1-(9Z)-octadecenoyl-2-(5Z,8Z,11Z,14Z)-eicosatetraenoyl-sn-glycero-3-phosphoethanolamine + CoA. The catalysed reaction is 1-(10Z-heptadecenoyl)-sn-glycero-3-phosphoethanolamine + (5Z,8Z,11Z,14Z)-eicosatetraenoyl-CoA = 1-(10Z-heptadecenoyl)-2-(5Z,8Z,11Z,14Z-eicosatetraenoyl)-sn-glycero-3-phosphoethanolamine + CoA. It carries out the reaction a 1-O-(1Z-alkenyl)-sn-glycero-3-phosphoethanolamine + (5Z,8Z,11Z,14Z)-eicosatetraenoyl-CoA = 1-O-(1Z)-alkenyl-2-(5Z,8Z,11Z,14Z)-eicosatetraenoyl-sn-glycero-3-phosphoethanolamine + CoA. It catalyses the reaction a 1-acyl-sn-glycero-3-phospho-L-serine + (9Z,12Z)-octadecadienoyl-CoA = 1-acyl-2-(9Z,12Z-octadecadienoyl)-sn-glycero-3-phospho-L-serine + CoA. The enzyme catalyses a 1-acyl-sn-glycero-3-phospho-L-serine + (5Z,8Z,11Z,14Z)-eicosatetraenoyl-CoA = 1-acyl-2-(5Z,8Z,11Z,14Z-eicosatetraenoyl)-sn-glycero-3-phospho-L-serine + CoA. The catalysed reaction is 1-hexadecanoyl-sn-glycero-3-phospho-L-serine + (9Z)-octadecenoyl-CoA = 1-hexadecanoyl-2-(9Z-octadecenoyl)-sn-glycero-3-phospho-L-serine + CoA. It carries out the reaction 1-(9Z-octadecenoyl)-sn-glycero-3-phospho-L-serine + (9Z)-octadecenoyl-CoA = 1,2-di-(9Z)-octadecenoyl-sn-glycero-3-phospho-L-serine + CoA. It catalyses the reaction 1-hexadecanoyl-sn-glycero-3-phospho-L-serine + (9Z,12Z)-octadecadienoyl-CoA = 1-hexadecanoyl-2-(9Z,12Z-octadecadienoyl)-sn-glycero-3-phospho-L-serine + CoA. The enzyme catalyses 1-(9Z-octadecenoyl)-sn-glycero-3-phospho-L-serine + (9Z,12Z)-octadecadienoyl-CoA = 1-(9Z-octadecenoyl)-2-(9Z,12Z-octadienoyl)-sn-glycero-3-phospho-L-serine + CoA. The catalysed reaction is 1-hexadecanoyl-sn-glycero-3-phospho-L-serine + (5Z,8Z,11Z,14Z)-eicosatetraenoyl-CoA = 1-hexadecanoyl-2-(5Z,8Z,11Z,14Z-eicosatetraenoyl)-sn-glycero-3-phospho-L-serine + CoA. It carries out the reaction 1-(9Z-octadecenoyl)-sn-glycero-3-phospho-L-serine + (5Z,8Z,11Z,14Z)-eicosatetraenoyl-CoA = 1-(9Z-octadecenoyl)-2-(5Z,8Z,11Z,14Z-eicosatetraenoyl)-sn-glycero-3-phospho-L-serine + CoA. The protein operates within lipid metabolism; phospholipid metabolism. Functionally, lysophospholipid O-acyltransferase (LPLAT) that catalyzes the reacylation step of the phospholipid remodeling process also known as the Lands cycle. Catalyzes transfer of the fatty acyl chain from fatty acyl-CoA to 1-acyl lysophospholipid to form various classes of phospholipids. Converts 1-acyl lysophosphatidylcholine (LPC) into phosphatidylcholine (PC) (LPCAT activity), 1-acyl lysophosphatidylserine (LPS) into phosphatidylserine (PS) (LPSAT activity) and 1-acyl lysophosphatidylethanolamine (LPE) into phosphatidylethanolamine (PE) (LPEAT activity). Favors polyunsaturated fatty acyl-CoAs as acyl donors compared to saturated fatty acyl-CoAs. Has higher activity for LPC acyl acceptors compared to LPEs and LPSs. Can also transfer the fatty acyl chain from fatty acyl-CoA to 1-O-alkyl lysophospholipid or 1-O-alkenyl lysophospholipid with lower efficiency. Acts as a major LPC O-acyltransferase in liver and intestine. As a component of the liver X receptor/NR1H3 or NR1H2 signaling pathway, mainly catalyzes the incorporation of arachidonate into PCs of endoplasmic reticulum (ER) membranes, increasing membrane dynamics and enabling triacylglycerols transfer to nascent very low-density lipoprotein (VLDL) particles. Promotes processing of sterol regulatory protein SREBF1 in hepatocytes, likely by facilitating the translocation of SREBF1-SCAP complex from ER to the Golgi apparatus. Participates in mechanisms by which the liver X receptor/NR1H3 or NR1H2 signaling pathway counteracts lipid-induced ER stress response and inflammation. Down-regulates hepatic inflammation by limiting arachidonic acid availability for synthesis of inflammatory eicosanoids, such as prostaglandins. In enterocytes, acts as a component of a gut-brain feedback loop that coordinates dietary lipid absorption and food intake. Regulates the abundance of PCs containing linoleate and arachidonate in enterocyte membranes, enabling passive diffusion of fatty acids and cholesterol across the membrane for efficient chylomicron assembly. In the intestinal crypt, acts as a component of dietary-responsive phospholipid-cholesterol axis, regulating the biosynthesis of cholesterol and its mitogenic effects on intestinal stem cells. This is Lysophospholipid acyltransferase 5 (Lpcat3) from Mus musculus (Mouse).